A 192-amino-acid chain; its full sequence is Orotate phosphoribosyltransferase (192 aa).

Position 116–124 (116–124 (EDVVTTGKS)) interacts with 5-phospho-alpha-D-ribose 1-diphosphate. Orotate-binding residues include Thr120 and Arg148.

Belongs to the purine/pyrimidine phosphoribosyltransferase family. PyrE subfamily. As to quaternary structure, homodimer. The cofactor is Mg(2+).

The catalysed reaction is orotidine 5'-phosphate + diphosphate = orotate + 5-phospho-alpha-D-ribose 1-diphosphate. It functions in the pathway pyrimidine metabolism; UMP biosynthesis via de novo pathway; UMP from orotate: step 1/2. In terms of biological role, catalyzes the transfer of a ribosyl phosphate group from 5-phosphoribose 1-diphosphate to orotate, leading to the formation of orotidine monophosphate (OMP). This chain is Orotate phosphoribosyltransferase, found in Clostridium perfringens (strain ATCC 13124 / DSM 756 / JCM 1290 / NCIMB 6125 / NCTC 8237 / Type A).